Consider the following 408-residue polypeptide: Na(+)-translocating NADH-quinone reductase subunit F (408 aa).

A helical membrane pass occupies residues 4-24 (VYLGVGMFTAIVLVLVLVILF). The 2Fe-2S ferredoxin-type domain maps to 33-127 (GDIIIGINGD…DMEIELDEEI (95 aa)). [2Fe-2S] cluster is bound by residues cysteine 70, cysteine 76, cysteine 79, and cysteine 111. Residues 130-270 (IKKWECDVIS…SGPFGEFFAK (141 aa)) enclose the FAD-binding FR-type domain.

It belongs to the NqrF family. In terms of assembly, composed of six subunits; NqrA, NqrB, NqrC, NqrD, NqrE and NqrF. The cofactor is [2Fe-2S] cluster. It depends on FAD as a cofactor.

The protein localises to the cell inner membrane. It carries out the reaction a ubiquinone + n Na(+)(in) + NADH + H(+) = a ubiquinol + n Na(+)(out) + NAD(+). Functionally, NQR complex catalyzes the reduction of ubiquinone-1 to ubiquinol by two successive reactions, coupled with the transport of Na(+) ions from the cytoplasm to the periplasm. The first step is catalyzed by NqrF, which accepts electrons from NADH and reduces ubiquinone-1 to ubisemiquinone by a one-electron transfer pathway. In Shewanella denitrificans (strain OS217 / ATCC BAA-1090 / DSM 15013), this protein is Na(+)-translocating NADH-quinone reductase subunit F.